We begin with the raw amino-acid sequence, 508 residues long: Photosystem II CP47 reaction center protein (508 aa).

6 helical membrane-spanning segments follow: residues 21–36 (AVHI…WAGS), 101–115 (IVFS…IWHW), 140–156 (GIHL…FGAF), 203–218 (IAAG…FHLS), 237–252 (VLSS…AFVV), and 457–472 (SFAL…HGAR).

The protein belongs to the PsbB/PsbC family. PsbB subfamily. In terms of assembly, PSII is composed of 1 copy each of membrane proteins PsbA, PsbB, PsbC, PsbD, PsbE, PsbF, PsbH, PsbI, PsbJ, PsbK, PsbL, PsbM, PsbT, PsbX, PsbY, PsbZ, Psb30/Ycf12, at least 3 peripheral proteins of the oxygen-evolving complex and a large number of cofactors. It forms dimeric complexes. Binds multiple chlorophylls. PSII binds additional chlorophylls, carotenoids and specific lipids. is required as a cofactor.

The protein resides in the plastid. The protein localises to the chloroplast thylakoid membrane. In terms of biological role, one of the components of the core complex of photosystem II (PSII). It binds chlorophyll and helps catalyze the primary light-induced photochemical processes of PSII. PSII is a light-driven water:plastoquinone oxidoreductase, using light energy to abstract electrons from H(2)O, generating O(2) and a proton gradient subsequently used for ATP formation. This is Photosystem II CP47 reaction center protein from Ranunculus macranthus (Large buttercup).